A 724-amino-acid chain; its full sequence is NAD(+) hydrolase SARM1 (724 aa).

A mitochondrion-targeting transit peptide spans 1-27 (MVLTLLFSAYKLCRFFIMSGPRPGADR). The stretch at 60 to 100 (EVQGALERSLPELQQALSELKQASAAQAVGAGLAEVFQLVE) is one ARM 1 repeat. Residues Trp-103, Arg-110, 149–157 (EQILVAENR), and 190–193 (HMFK) each bind NAD(+). ARM repeat units follow at residues 114–153 (QGLC…QILV), 155–193 (ENRD…HMFK), 196–235 (EETC…NCAL), 237–280 (GGQT…LATN), 281–314 (KEVE…CLVD), 315–354 (ASDT…AEAA), and 359–402 (QGKT…EEVP). 2 consecutive SAM domains span residues 412–476 (WKEA…LKTF) and 486–548 (NLAD…MLHS). 2 positions are modified to phosphoserine: Ser-548 and Ser-558. Residues 560-703 (DTPDVFISYR…KIIRFLQGRP (144 aa)) enclose the TIR domain. Residues 569–570 (RR) and Glu-599 contribute to the NAD(+) site. The active site involves Glu-642. Polar residues predominate over residues 703–717 (PSQDSSAGSDTSLEG). The tract at residues 703–724 (PSQDSSAGSDTSLEGATSMGLP) is disordered.

It belongs to the SARM1 family. In terms of assembly, homooctamer; forms an octameric ring via SAM domains. Interacts with TICAM1/TRIF and thereby interferes with TICAM1/TRIF function. Interacts with MAPK10/JNK3 and SDC2 (via cytoplasmic domain). Post-translationally, phosphorylation at Ser-548 by JNK kinases (MAPK8, MAPK9 and /or MAPK10) enhance the NAD(+) hydrolase (NADase) activity. Phosphorylation at Ser-548 and subsequent activation takes place in response to oxidative stress conditions and inhibits mitochondrial respiration. Phosphorylation at Ser-548 increases in response to cerebral ischemia/reperfusion (I/R) injury.

The protein resides in the cytoplasm. It is found in the cell projection. The protein localises to the axon. It localises to the dendrite. Its subcellular location is the synapse. The protein resides in the mitochondrion. The catalysed reaction is NAD(+) + H2O = ADP-D-ribose + nicotinamide + H(+). It catalyses the reaction NAD(+) = cyclic ADP-beta-D-ribose + nicotinamide + H(+). The enzyme catalyses NADP(+) + H2O = ADP-D-ribose 2'-phosphate + nicotinamide + H(+). With respect to regulation, autoinhibited: in the inactive state, the enzymatic TIR domain is held apart by the autoinhibiting ARM repeats. NAD(+)-binding to ARM repeats maintains an inactive state by promoting interaction between ARM repeats and the TIR domain, thereby facilitating inhibition of the enzymatic TIR domain. Following activation, possibly by nicotinamide mononucleotide (NMN), auto-inhibitory interactions are released, allowing self-association of the TIR domains and subsequent activation of the NAD(+) hydrolase (NADase) activity. Self-association of TIR domains is facilitated by the octamer of SAM domains. Functionally, NAD(+) hydrolase, which plays a key role in axonal degeneration following injury by regulating NAD(+) metabolism. Acts as a negative regulator of MYD88- and TRIF-dependent toll-like receptor signaling pathway by promoting Wallerian degeneration, an injury-induced form of programmed subcellular death which involves degeneration of an axon distal to the injury site. Wallerian degeneration is triggered by NAD(+) depletion: in response to injury, SARM1 is activated and catalyzes cleavage of NAD(+) into ADP-D-ribose (ADPR), cyclic ADPR (cADPR) and nicotinamide; NAD(+) cleavage promoting cytoskeletal degradation and axon destruction. Also able to hydrolyze NADP(+), but not other NAD(+)-related molecules. Can activate neuronal cell death in response to stress. Regulates dendritic arborization through the MAPK4-JNK pathway. Involved in innate immune response: inhibits both TICAM1/TRIF- and MYD88-dependent activation of JUN/AP-1, TRIF-dependent activation of NF-kappa-B and IRF3, and the phosphorylation of MAPK14/p38. This chain is NAD(+) hydrolase SARM1, found in Rattus norvegicus (Rat).